Here is a 141-residue protein sequence, read N- to C-terminus: Large ribosomal subunit protein uL11 (141 aa).

The protein belongs to the universal ribosomal protein uL11 family. As to quaternary structure, part of the ribosomal stalk of the 50S ribosomal subunit. Interacts with L10 and the large rRNA to form the base of the stalk. L10 forms an elongated spine to which L12 dimers bind in a sequential fashion forming a multimeric L10(L12)X complex. Post-translationally, one or more lysine residues are methylated.

In terms of biological role, forms part of the ribosomal stalk which helps the ribosome interact with GTP-bound translation factors. This chain is Large ribosomal subunit protein uL11, found in Prochlorococcus marinus (strain MIT 9313).